We begin with the raw amino-acid sequence, 78 residues long: Small ribosomal subunit protein uS17 (78 aa).

The protein belongs to the universal ribosomal protein uS17 family. In terms of assembly, part of the 30S ribosomal subunit.

Its function is as follows. One of the primary rRNA binding proteins, it binds specifically to the 5'-end of 16S ribosomal RNA. This Parvibaculum lavamentivorans (strain DS-1 / DSM 13023 / NCIMB 13966) protein is Small ribosomal subunit protein uS17.